A 152-amino-acid chain; its full sequence is Transcriptional regulator MraZ (152 aa).

SpoVT-AbrB domains are found at residues 5-52 (ATLV…PLPE) and 81-124 (ASEC…DETT).

It belongs to the MraZ family. As to quaternary structure, forms oligomers.

The protein localises to the cytoplasm. The protein resides in the nucleoid. In terms of biological role, negatively regulates its own expression and that of the subsequent genes in the proximal part of the division and cell wall (dcw) gene cluster. Acts by binding directly to DNA. May also regulate the expression of genes outside the dcw cluster. The sequence is that of Transcriptional regulator MraZ from Shigella flexneri serotype 5b (strain 8401).